The chain runs to 809 residues: BTB/POZ domain-containing protein At2g30600 (809 aa).

BTB domains are found at residues 211 to 273 and 351 to 420; these read SDTV…QILE and SDIK…NMED. In terms of domain architecture, BACK spans 466-537; sequence VVSSISSCKL…LMWCMKAEES (72 aa).

It functions in the pathway protein modification; protein ubiquitination. In terms of biological role, may act as a substrate-specific adapter of an E3 ubiquitin-protein ligase complex (CUL3-RBX1-BTB) which mediates the ubiquitination and subsequent proteasomal degradation of target proteins. This Arabidopsis thaliana (Mouse-ear cress) protein is BTB/POZ domain-containing protein At2g30600.